Here is a 142-residue protein sequence, read N- to C-terminus: Putative pre-16S rRNA nuclease (142 aa).

It belongs to the YqgF nuclease family.

The protein resides in the cytoplasm. Could be a nuclease involved in processing of the 5'-end of pre-16S rRNA. This is Putative pre-16S rRNA nuclease from Chlorobaculum tepidum (strain ATCC 49652 / DSM 12025 / NBRC 103806 / TLS) (Chlorobium tepidum).